A 114-amino-acid polypeptide reads, in one-letter code: Anti-adapter protein IraM (114 aa).

It belongs to the IraM/RssC family.

It is found in the cytoplasm. Functionally, involved in the stabilization of the sigma stress factor RpoS. The protein is Anti-adapter protein IraM of Citrobacter koseri (strain ATCC BAA-895 / CDC 4225-83 / SGSC4696).